The chain runs to 232 residues: LexA repressor (232 aa).

The H-T-H motif DNA-binding region spans 26-46 (FDEMKDALDLRSKSGIHRLIT). Active-site for autocatalytic cleavage activity residues include Ser153 and Lys191.

The protein belongs to the peptidase S24 family. As to quaternary structure, homodimer.

The enzyme catalyses Hydrolysis of Ala-|-Gly bond in repressor LexA.. In terms of biological role, represses a number of genes involved in the response to DNA damage (SOS response), including recA and lexA. In the presence of single-stranded DNA, RecA interacts with LexA causing an autocatalytic cleavage which disrupts the DNA-binding part of LexA, leading to derepression of the SOS regulon and eventually DNA repair. The sequence is that of LexA repressor from Bradyrhizobium sp. (strain BTAi1 / ATCC BAA-1182).